The primary structure comprises 384 residues: 4-hydroxy-3-methylbut-2-en-1-yl diphosphate synthase (flavodoxin) (384 aa).

The [4Fe-4S] cluster site is built by Cys-280, Cys-283, Cys-315, and Glu-322.

This sequence belongs to the IspG family. [4Fe-4S] cluster is required as a cofactor.

The enzyme catalyses (2E)-4-hydroxy-3-methylbut-2-enyl diphosphate + oxidized [flavodoxin] + H2O + 2 H(+) = 2-C-methyl-D-erythritol 2,4-cyclic diphosphate + reduced [flavodoxin]. The protein operates within isoprenoid biosynthesis; isopentenyl diphosphate biosynthesis via DXP pathway; isopentenyl diphosphate from 1-deoxy-D-xylulose 5-phosphate: step 5/6. Its function is as follows. Converts 2C-methyl-D-erythritol 2,4-cyclodiphosphate (ME-2,4cPP) into 1-hydroxy-2-methyl-2-(E)-butenyl 4-diphosphate. The polypeptide is 4-hydroxy-3-methylbut-2-en-1-yl diphosphate synthase (flavodoxin) (Parafrankia sp. (strain EAN1pec)).